Consider the following 169-residue polypeptide: Putative esterase F42H10.6 (169 aa).

It belongs to the thioesterase paaI family.

This chain is Putative esterase F42H10.6, found in Caenorhabditis elegans.